Reading from the N-terminus, the 1040-residue chain is MQVLPPGSTGGPSRLFILRPVATTLLMAAILLAGIIGYRFLPVAALPEVDYPTIQVVTLYPGASPDVMTSAVTAPLERQFGQMSGLKQMSSQSSGGASVVTLQFQLTLPLDVAEQEVQAAINAATNLLPSDLPNPPIYSKVNPADPPIMTLAVTSNAMPMTQVEDMVETRVAQKISQVSGVGLVTLAGGQRPAVRVKLNAQAVAALGLTSETIRTAITGANVNSAKGSLDGPERAVTLSANDQMQSADEYRKLIIAYQNGAPVRLGDVATVEQGAENSWLGAWANQAPAIVMNVQRQPGANIIATADSIRQMLPQLTESLPKSVKVTVLSDRTTNIRASVRDTQFELMLAIALVVMIIYLFLRNIPATIIPGVAVPLSLIGTFAVMVFLDFSINNLTLMALTIATGFVVDDAIVVIENISRYIEKGEKPLAAALKGAGEIGFTIISLTFSLIAVLIPLLFMGDIVGRLFREFAVTLAVAILISAVVSLTLTPMMCARMLSQQSLRKQNRFSRACERMFDRVIASYGRGLAKVLNHPWLTLSVAFATLLLSIMLWIVIPKGFFPVQDNGIIQGTLQAPQSSSYASMAQRQRQVAERILQDPAVQSLTTFVGVDGANPTLNSARLQINLKPLDARDDRVQQVISRLQTAVATIPGVALYLQPTQDLTIDTQVSRTQYQFTLQATTLDALSHWVPKLQNALQSLPQLSEVSSDWQDRGLAAWVNVDRDSASRLGISMADVDNALYNAFGQRLISTIYTQANQYRVVLEHNTASTPGLAALETIRLTSRDGGTVPLSAIARIEQRFAPLSINHLDQFPVTTFSFNVPEGYSLGDAVQAILDTEKTLALPADITTQFQGSTLAFQAALGSTVWLIVAAVVAMYIVLGVLYESFIHPITILSTLPTAGVGALLALIIAGSELDIIAIIGIILLIGIVKKNAIMMIDFALAAEREQGMSPRDAIFQACLLRFRPILMTTLAALLGALPLMLSTGVGAELRRPLGIAMVGGLLVSQVLTLFTTPVIYLLFDRLSLYVKSRFPRHKEEA.

12 helical membrane-spanning segments follow: residues 25-45 (LLMA…PVAA), 347-367 (LMLA…NIPA), 369-389 (IIPG…MVFL), 396-416 (LTLM…IVVI), 440-460 (IGFT…PLLF), 472-492 (FAVT…TLTP), 537-557 (WLTL…WIVI), 863-883 (LGST…VLGV), 888-908 (FIHP…ALLA), 910-930 (IIAG…LIGI), 968-988 (ILMT…STGV), and 998-1018 (IAMV…TPVI).

This sequence belongs to the resistance-nodulation-cell division (RND) (TC 2.A.6) family. MdtB subfamily. Part of a tripartite efflux system composed of MdtA, MdtB and MdtC. MdtB forms a heteromultimer with MdtC.

It is found in the cell inner membrane. The protein is Multidrug resistance protein MdtB of Salmonella newport (strain SL254).